Consider the following 99-residue polypeptide: NADH-quinone oxidoreductase subunit K (99 aa).

The next 3 membrane-spanning stretches (helical) occupy residues 3–23, 28–48, and 62–82; these read PANY…GVLV, IVVF…LVTF, and FFVM…ILAI.

This sequence belongs to the complex I subunit 4L family. As to quaternary structure, NDH-1 is composed of 14 different subunits. Subunits NuoA, H, J, K, L, M, N constitute the membrane sector of the complex.

The protein localises to the cell membrane. It catalyses the reaction a quinone + NADH + 5 H(+)(in) = a quinol + NAD(+) + 4 H(+)(out). Its function is as follows. NDH-1 shuttles electrons from NADH, via FMN and iron-sulfur (Fe-S) centers, to quinones in the respiratory chain. The immediate electron acceptor for the enzyme in this species is believed to be a menaquinone. Couples the redox reaction to proton translocation (for every two electrons transferred, four hydrogen ions are translocated across the cytoplasmic membrane), and thus conserves the redox energy in a proton gradient. This Parafrankia sp. (strain EAN1pec) protein is NADH-quinone oxidoreductase subunit K.